The chain runs to 213 residues: Ras-related protein Rab-19 (213 aa).

8 residues coordinate GTP: serine 24, valine 26, glycine 27, lysine 28, threonine 29, cysteine 30, aspartate 42, and threonine 47. Mg(2+) is bound at residue threonine 29. A Switch 1 motif is present at residues 37-52; the sequence is SGIFMDNQQNTIGVDF. Threonine 47 and aspartate 70 together coordinate Mg(2+). Positions 72 to 87 match the Switch 2 motif; that stretch reads AGQERFRTITQSYYRS. 7 residues coordinate GTP: glycine 73, asparagine 128, lysine 129, aspartate 131, serine 159, alanine 160, and lysine 161. 2 S-geranylgeranyl cysteine lipidation sites follow: cysteine 211 and cysteine 213. Cysteine 213 is modified (cysteine methyl ester).

The protein belongs to the small GTPase superfamily. Rab family. It depends on Mg(2+) as a cofactor.

It localises to the cell membrane. It carries out the reaction GTP + H2O = GDP + phosphate + H(+). With respect to regulation, regulated by guanine nucleotide exchange factors (GEFs) which promote the exchange of bound GDP for free GTP. Regulated by GTPase activating proteins (GAPs) which increase the GTP hydrolysis activity. Inhibited by GDP dissociation inhibitors (GDIs). Functionally, the small GTPases Rab are key regulators of intracellular membrane trafficking, from the formation of transport vesicles to their fusion with membranes. Rabs cycle between an inactive GDP-bound form and an active GTP-bound form that is able to recruit to membranes different set of downstream effectors directly responsible for vesicle formation, movement, tethering and fusion. In Xenopus laevis (African clawed frog), this protein is Ras-related protein Rab-19 (rab19).